A 459-amino-acid chain; its full sequence is Cytosolic carboxypeptidase 6 (459 aa).

The region spanning 142–418 is the Peptidase M14 domain; it reads IPYTYGQMQI…AFCRALLNFY (277 aa). Residues His-204, Glu-207, and His-302 each coordinate Zn(2+). Glu-376 (proton donor/acceptor) is an active-site residue.

This sequence belongs to the peptidase M14 family. The cofactor is Zn(2+). As to expression, expressed in labial and amphid neurons.

Its subcellular location is the cytoplasm. It carries out the reaction (L-glutamyl)(n+1)-gamma-L-glutamyl-L-glutamyl-[protein] + H2O = (L-glutamyl)(n)-gamma-L-glutamyl-L-glutamyl-[protein] + L-glutamate. Metallocarboxypeptidase that catalyzes the removing of polyglutamate side chains that are present on the gamma-carboxyl group of glutamate residues of tubulin in sensory cilia. Probably via the deglutamylation of tubulin, promotes microtubule stability required for axon regrowth after injury. Also regulates microtubule dynamics in uterine muscle cells. The sequence is that of Cytosolic carboxypeptidase 6 from Caenorhabditis elegans.